A 439-amino-acid chain; its full sequence is MATSVSTIGAANKAPLSLNNSVAGTSVPSTAFFGKTLKKVYGKGVSSPKVTNRSLRIAAEEKDADPKKQTYSDRWKGLVQDFSDDQQDIARGKGMVDSLFQAPTGTGTHHAVLQSYEYVSQGLRQYNMDNTLDGFYIAPSFMDKLVVHITKNFLKLPNIKVPLILGVWGGKGQGKSFQCELVFRKMGINPIMMSAGELESGNAGEPAKLIRQRYREAAEIIRKGNICCLFINDLDAGAGRMGGTTQYTVNNQMVNATLMNIADNPTNVQLPGMYNKQENARVPIIVTGNDFSTLYAPLIRDGRMEKFYWAPTREDRIGVCKGIFRTDNVPEEAVIKIVDTFPGQSIDFFGALRARVYDDEVRKWVSGTGIEAIGDKLLNSFDGPPTFEQPKMTVEKLLEYGNMLVQEQENVKRVQLAETYLKEAALGDANADAINTGNF.

Residues 1–58 (MATSVSTIGAANKAPLSLNNSVAGTSVPSTAFFGKTLKKVYGKGVSSPKVTNRSLRIA) constitute a chloroplast transit peptide. ATP is bound at residue 169 to 176 (GGKGQGKS).

This sequence belongs to the RuBisCO activase family.

It localises to the plastid. Its subcellular location is the chloroplast stroma. Functionally, activation of RuBisCO (ribulose-1,5-bisphosphate carboxylase/oxygenase; EC 4.1.1.39) involves the ATP-dependent carboxylation of the epsilon-amino group of lysine leading to a carbamate structure. The sequence is that of Ribulose bisphosphate carboxylase/oxygenase activase 2, chloroplastic (RCA) from Nicotiana tabacum (Common tobacco).